The chain runs to 55 residues: Large ribosomal subunit protein bL33 (55 aa).

Positions 1–11 (MAKSGRDKIKL) are enriched in basic and acidic residues. The interval 1 to 27 (MAKSGRDKIKLESTAGTGHFYTTTKNK) is disordered. Residues 14-24 (TAGTGHFYTTT) show a composition bias toward polar residues.

The protein belongs to the bacterial ribosomal protein bL33 family.

This Herminiimonas arsenicoxydans protein is Large ribosomal subunit protein bL33.